A 199-amino-acid polypeptide reads, in one-letter code: Ribosome maturation factor RimM (199 aa).

In terms of domain architecture, PRC barrel spans 93-169; that stretch reads DDEYYHADLI…IELPDEIDGE (77 aa). The tract at residues 164-199 is disordered; that stretch reads DEIDGEDRASADESASAEDDAAAPNSARHPRESGDP.

It belongs to the RimM family. As to quaternary structure, binds ribosomal protein uS19.

The protein localises to the cytoplasm. Functionally, an accessory protein needed during the final step in the assembly of 30S ribosomal subunit, possibly for assembly of the head region. Essential for efficient processing of 16S rRNA. May be needed both before and after RbfA during the maturation of 16S rRNA. It has affinity for free ribosomal 30S subunits but not for 70S ribosomes. The polypeptide is Ribosome maturation factor RimM (Bradyrhizobium sp. (strain ORS 278)).